Consider the following 175-residue polypeptide: NADH-ubiquinone oxidoreductase chain 6 (175 aa).

Helical transmembrane passes span 1–21, 25–45, 47–67, 88–108, and 149–169; these read MMTYIVFILSIVFVMSFVGFA, SPIYGGLVLIISGGIGCAIVL, FGGSFLGLMVFLIYLGGMLVV, AVLAAFITGLLSELLTACYIL, and YGTWLVVVTGWSLLIGVLVIM.

This sequence belongs to the complex I subunit 6 family. In terms of assembly, core subunit of respiratory chain NADH dehydrogenase (Complex I) which is composed of 45 different subunits.

It is found in the mitochondrion inner membrane. It catalyses the reaction a ubiquinone + NADH + 5 H(+)(in) = a ubiquinol + NAD(+) + 4 H(+)(out). In terms of biological role, core subunit of the mitochondrial membrane respiratory chain NADH dehydrogenase (Complex I) which catalyzes electron transfer from NADH through the respiratory chain, using ubiquinone as an electron acceptor. Essential for the catalytic activity and assembly of complex I. This Canis lupus familiaris (Dog) protein is NADH-ubiquinone oxidoreductase chain 6 (MT-ND6).